The primary structure comprises 673 residues: DNA ligase (673 aa).

NAD(+) contacts are provided by residues 34-38 (DAEYD), 83-84 (SL), and glutamate 116. The active-site N6-AMP-lysine intermediate is the lysine 118. The NAD(+) site is built by arginine 139, glutamate 176, lysine 293, and lysine 317. 4 residues coordinate Zn(2+): cysteine 411, cysteine 414, cysteine 429, and cysteine 435. The BRCT domain occupies 595-673 (NQQNPFFGKT…EDEFLKWVNS (79 aa)).

This sequence belongs to the NAD-dependent DNA ligase family. LigA subfamily. It depends on Mg(2+) as a cofactor. The cofactor is Mn(2+).

The catalysed reaction is NAD(+) + (deoxyribonucleotide)n-3'-hydroxyl + 5'-phospho-(deoxyribonucleotide)m = (deoxyribonucleotide)n+m + AMP + beta-nicotinamide D-nucleotide.. DNA ligase that catalyzes the formation of phosphodiester linkages between 5'-phosphoryl and 3'-hydroxyl groups in double-stranded DNA using NAD as a coenzyme and as the energy source for the reaction. It is essential for DNA replication and repair of damaged DNA. This is DNA ligase from Legionella pneumophila (strain Corby).